Reading from the N-terminus, the 1111-residue chain is Lon protease homolog, mitochondrial (1111 aa).

A mitochondrion-targeting transit peptide spans 1 to 21 (MLRSSRSRLVTRNILLRQFKN). 2 disordered regions span residues 85 to 177 (IQLK…AKQP) and 288 to 311 (PPTS…ENNE). Basic and acidic residues predominate over residues 88 to 125 (KQDDKGKDIDQPESENRKKEEEQVPTEEKDNDTAKESE). Polar residues predominate over residues 126 to 135 (TSQQRDSVAE). A compositionally biased stretch (gly residues) spans 145 to 167 (GASGNGESSGNGSGDDGNNGSGN). Residues 185–450 (VMALPISRRP…KALTVLKKEL (266 aa)) form the Lon N-terminal domain. The segment covering 294 to 306 (NLKDESDVSKSEG) has biased composition (basic and acidic residues). 602–609 (GPPGVGKT) serves as a coordination point for ATP. 2 stretches are compositionally biased toward basic and acidic residues: residues 819–835 (ENEE…KQSE) and 853–865 (ELIK…DNKG). The segment at 819–866 (ENEEVKDQKDIKVKQSENKSSAEASTVESTTEENELIKTQKSHDNKGS) is disordered. In terms of domain architecture, Lon proteolytic spans 899–1085 (STPPGVVMGL…EDVFQRLFGD (187 aa)). Active-site residues include Ser991 and Lys1034.

This sequence belongs to the peptidase S16 family. In terms of assembly, homohexamer or homoheptamer. Organized in a ring with a central cavity.

The protein localises to the mitochondrion matrix. It carries out the reaction Hydrolysis of proteins in presence of ATP.. ATP-dependent serine protease that mediates the selective degradation of misfolded, unassembled or oxidatively damaged polypeptides as well as certain short-lived regulatory proteins in the mitochondrial matrix. May also have a chaperone function in the assembly of inner membrane protein complexes. Participates in the regulation of mitochondrial gene expression and in the maintenance of the integrity of the mitochondrial genome. Binds to mitochondrial DNA in a site-specific manner. The chain is Lon protease homolog, mitochondrial from Kluyveromyces lactis (strain ATCC 8585 / CBS 2359 / DSM 70799 / NBRC 1267 / NRRL Y-1140 / WM37) (Yeast).